The sequence spans 338 residues: 1-aminocyclopropane-1-carboxylate deaminase (338 aa).

Lysine 51 is subject to N6-(pyridoxal phosphate)lysine. The active-site Nucleophile is serine 78.

The protein belongs to the ACC deaminase/D-cysteine desulfhydrase family. As to quaternary structure, homotrimer. Requires pyridoxal 5'-phosphate as cofactor.

The catalysed reaction is 1-aminocyclopropane-1-carboxylate + H2O = 2-oxobutanoate + NH4(+). In terms of biological role, catalyzes a cyclopropane ring-opening reaction, the irreversible conversion of 1-aminocyclopropane-1-carboxylate (ACC) to ammonia and alpha-ketobutyrate. Allows growth on ACC as a nitrogen source. The sequence is that of 1-aminocyclopropane-1-carboxylate deaminase from Burkholderia thailandensis (strain ATCC 700388 / DSM 13276 / CCUG 48851 / CIP 106301 / E264).